We begin with the raw amino-acid sequence, 20 residues long: Putative serine protease (20 aa).

This sequence belongs to the peptidase S1 family.

It localises to the secreted. In terms of biological role, binds the A.niger cell wall component alpha-1,3-glucan, a fungal pathogen-associated molecular pattern (PAMP) that activates the host immune response. In Galleria mellonella (Greater wax moth), this protein is Putative serine protease.